The sequence spans 173 residues: Translation initiation factor IF-3 (173 aa).

This sequence belongs to the IF-3 family. In terms of assembly, monomer.

It localises to the cytoplasm. Functionally, IF-3 binds to the 30S ribosomal subunit and shifts the equilibrium between 70S ribosomes and their 50S and 30S subunits in favor of the free subunits, thus enhancing the availability of 30S subunits on which protein synthesis initiation begins. The chain is Translation initiation factor IF-3 from Methylobacterium radiotolerans (strain ATCC 27329 / DSM 1819 / JCM 2831 / NBRC 15690 / NCIMB 10815 / 0-1).